The chain runs to 594 residues: Proline--tRNA ligase (594 aa).

Belongs to the class-II aminoacyl-tRNA synthetase family. ProS type 1 subfamily. Homodimer.

It localises to the cytoplasm. The enzyme catalyses tRNA(Pro) + L-proline + ATP = L-prolyl-tRNA(Pro) + AMP + diphosphate. In terms of biological role, catalyzes the attachment of proline to tRNA(Pro) in a two-step reaction: proline is first activated by ATP to form Pro-AMP and then transferred to the acceptor end of tRNA(Pro). As ProRS can inadvertently accommodate and process non-cognate amino acids such as alanine and cysteine, to avoid such errors it has two additional distinct editing activities against alanine. One activity is designated as 'pretransfer' editing and involves the tRNA(Pro)-independent hydrolysis of activated Ala-AMP. The other activity is designated 'posttransfer' editing and involves deacylation of mischarged Ala-tRNA(Pro). The misacylated Cys-tRNA(Pro) is not edited by ProRS. The polypeptide is Proline--tRNA ligase (Synechococcus sp. (strain WH7803)).